Consider the following 178-residue polypeptide: Leukemia NUP98 fusion partner 1 (178 aa).

3 disordered regions span residues 28–55 (EDQRGLRERHRLQATSHRKTSLPCPLPV), 89–108 (SEDGSFKEPLESKGRSHSKI), and 147–178 (IKSRKKVEEERSSRKEEHGEAHMAPLFEKGPE). The segment covering 34–47 (RERHRLQATSHRKT) has biased composition (basic residues). Over residues 147-167 (IKSRKKVEEERSSRKEEHGEA) the composition is skewed to basic and acidic residues.

This is Leukemia NUP98 fusion partner 1 (LNP1) from Homo sapiens (Human).